We begin with the raw amino-acid sequence, 701 residues long: MARITPIARYRNIGISAHIDAGKTTTTERILFYTGVNHKIGEVHNGAATMDWMAQEQERGITITSAATTCFWAGMAKQFDSHRINIIDTPGHVDFTIEVERSMRVLDGAVMVYCAVGGVQPQSETVWRQANKYKVPRIAFVNKMDRMGANYLRVVEQLKTRLAANPVPIQLAIGAEEKFTGVVDLVKMKAINWSEADQGVTFTYEDIPADLTELADKWHQHLVESAAEASEELMDKYLGGEELTEEEIKHGLRQRVLNNEIILVTCGSAFKNKGVQAMLDAVIEYLPAPTDVAAINGVLEDGETHAERHSSDEEPFSALAFKIATDPFVGNLTFFRVYSGVVNSGDTVLNSVKDKRERFGRIVQMHANKREEIKEVRAGDIAAAIGLKDVTTGDTLCDTSAPIILERMEFPEPVISVAVEPKTKADQEKMGLALGRLAQEDPSFRVWTDEESGQTIIAGMGELHLEILVDRMRREFNVEANVGKPQVAYRETIRSIVEQEGKFVRQSGGRGQFGHVWLRIEPMEPGGKGYEFLNEIVGGVVPKEYVPAVDKGVQEQLKSGVLAGYPIVDVRVAAFDGSYHEVDSSEMAFKIAGSMAFKEGFMKAKPVLLEPIMKVEVETPEDYMGDVIGDLNRRRGMIDGMEDTTTGKTVRAQVPLSEMFGYATDLRSQTQGRASYSMEFLKYNEAPNNVAQAIIETRRAK.

Residues alanine 8–threonine 290 form the tr-type G domain. Residues alanine 17–threonine 24, aspartate 88–histidine 92, and asparagine 142–aspartate 145 each bind GTP.

The protein belongs to the TRAFAC class translation factor GTPase superfamily. Classic translation factor GTPase family. EF-G/EF-2 subfamily.

Its subcellular location is the cytoplasm. Catalyzes the GTP-dependent ribosomal translocation step during translation elongation. During this step, the ribosome changes from the pre-translocational (PRE) to the post-translocational (POST) state as the newly formed A-site-bound peptidyl-tRNA and P-site-bound deacylated tRNA move to the P and E sites, respectively. Catalyzes the coordinated movement of the two tRNA molecules, the mRNA and conformational changes in the ribosome. In Sodalis glossinidius (strain morsitans), this protein is Elongation factor G.